A 337-amino-acid polypeptide reads, in one-letter code: Glyceraldehyde-3-phosphate dehydrogenase, cytosolic (337 aa).

NAD(+) is bound by residues 13-14, Asp-35, and Arg-82; that span reads RI. Residues 153–155, Thr-184, 213–214, and Arg-236 each bind D-glyceraldehyde 3-phosphate; these read SCT and TG. Catalysis depends on Cys-154, which acts as the Nucleophile. Residue Asn-318 coordinates NAD(+).

This sequence belongs to the glyceraldehyde-3-phosphate dehydrogenase family. In terms of assembly, homotetramer.

Its subcellular location is the cytoplasm. It catalyses the reaction D-glyceraldehyde 3-phosphate + phosphate + NAD(+) = (2R)-3-phospho-glyceroyl phosphate + NADH + H(+). The protein operates within carbohydrate degradation; glycolysis; pyruvate from D-glyceraldehyde 3-phosphate: step 1/5. Functionally, key enzyme in glycolysis that catalyzes the first step of the pathway by converting D-glyceraldehyde 3-phosphate (G3P) into 3-phospho-D-glyceroyl phosphate. Essential for the maintenance of cellular ATP levels and carbohydrate metabolism. In Craterostigma plantagineum (Blue gem), this protein is Glyceraldehyde-3-phosphate dehydrogenase, cytosolic (GAPC).